The chain runs to 67 residues: Large ribosomal subunit protein bL32 (67 aa).

Positions 1–19 (MAVPKRKMSRANTRMRRSQ) are enriched in basic residues. Positions 1-22 (MAVPKRKMSRANTRMRRSQWKA) are disordered.

This sequence belongs to the bacterial ribosomal protein bL32 family.

The protein is Large ribosomal subunit protein bL32 of Kocuria rhizophila (strain ATCC 9341 / DSM 348 / NBRC 103217 / DC2201).